We begin with the raw amino-acid sequence, 1223 residues long: Glycerophosphocholine phosphodiesterase GDE1 (1223 aa).

Positions 1-213 (MKFGKTFANH…GTNQQMSTMK (213 aa)) constitute an SPX domain. Positions 43-59 (HNKNSYDEGRPPTKMRD) are enriched in basic and acidic residues. The segment at 43–64 (HNKNSYDEGRPPTKMRDSSNSA) is disordered. ANK repeat units follow at residues 427–456 (YKRTPLHYSCQYGLSEVTKLIIKLMKEWNI), 472–502 (ESLTPLHLCVLGAHPKTTEVLLQSLDPNVKL), 504–533 (SSSLLHLATEWNNYPLLHVLLSSKRFDINY), 538–567 (LHETPLYLACRLNFFEAAVCLLYNGADLEI), 572–601 (FGWTAIFVAAAEGFTDIVKLLIANNANFDI), and 605–634 (GGWTPMEHAVLRGHLHIADMVQIRDELVTH). The residue at position 653 (serine 653) is a Phosphoserine. Residues 872 to 1217 (TRVIGHRGLG…DSVLAIRRGL (346 aa)) enclose the GP-PDE domain. The a divalent metal cation site is built by glutamate 911, aspartate 913, and histidine 926. Serine 983 carries the post-translational modification Phosphoserine.

It belongs to the GDE1 family. A divalent metal cation is required as a cofactor.

Its subcellular location is the cytoplasm. It catalyses the reaction sn-glycerol 3-phosphocholine + H2O = sn-glycerol 3-phosphate + choline + H(+). It carries out the reaction sn-glycero-3-phospho-1D-myo-inositol + H2O = myo-inositol + sn-glycerol 3-phosphate + H(+). Functionally, glycerophosphocholine glycerophosphodiesterase responsible for the hydrolysis of intracellular glycerophosphocholine into glycerol-phosphate and choline. The choline is used for phosphatidyl-choline synthesis. Required for utilization of glycerophosphocholine as phosphate source. May also use glycerophosphoinositol as substrate in vivo. The chain is Glycerophosphocholine phosphodiesterase GDE1 from Saccharomyces cerevisiae (strain ATCC 204508 / S288c) (Baker's yeast).